Reading from the N-terminus, the 132-residue chain is Large ribosomal subunit protein uL14 (132 aa).

This sequence belongs to the universal ribosomal protein uL14 family. As to quaternary structure, part of the 50S ribosomal subunit. Forms a cluster with proteins L3 and L24e, part of which may contact the 16S rRNA in 2 intersubunit bridges.

In terms of biological role, binds to 23S rRNA. Forms part of two intersubunit bridges in the 70S ribosome. In Methanocorpusculum labreanum (strain ATCC 43576 / DSM 4855 / Z), this protein is Large ribosomal subunit protein uL14.